We begin with the raw amino-acid sequence, 63 residues long: Venom peptide 2b (63 aa).

Residues 1–22 form the signal peptide; sequence MRGTSFILFAVVVILGFLHGNA. 5 AXPX repeats span residues 22 to 25, 26 to 29, 32 to 35, 38 to 41, and 44 to 47; these read AEPL, ANPE, and ANPD. The propeptide occupies 23–48; it reads EPLANPEPSANPDPLANPDPLANPEA. At Leu-62 the chain carries Leucine amide.

The protein belongs to the MCD family. Mastoparan subfamily. In terms of tissue distribution, expressed by the venom gland.

It localises to the secreted. Its subcellular location is the target cell membrane. Antimicrobial peptide with strong and moderate activity against the fungi B.cinerea (MIC=5 uM) and C.albicans (MIC=100 uM), the Gram-negative bacterium E.coli (MIC=200 uM) and the Gram-positive bacterium S.aureus (MIC=25 uM). Shows cytolytic activity against insect cell lines. Has potent hemolytic activity against human erythrocytes (EC(50)=64 uM). In vivo, peptide injection in the vicinity of the head and thorax of lepidopteran larvae induces feeding disorder followed by death due to starvation. The chain is Venom peptide 2b from Eumenes pomiformis (Potter wasp).